The chain runs to 333 residues: Protein RecA (333 aa).

Glycine 69 to threonine 76 lines the ATP pocket.

It belongs to the RecA family.

The protein resides in the cytoplasm. Its function is as follows. Can catalyze the hydrolysis of ATP in the presence of single-stranded DNA, the ATP-dependent uptake of single-stranded DNA by duplex DNA, and the ATP-dependent hybridization of homologous single-stranded DNAs. It interacts with LexA causing its activation and leading to its autocatalytic cleavage. This Mesoplasma florum (strain ATCC 33453 / NBRC 100688 / NCTC 11704 / L1) (Acholeplasma florum) protein is Protein RecA.